We begin with the raw amino-acid sequence, 162 residues long: Peptidyl-prolyl cis-trans isomerase (162 aa).

The 147-residue stretch at 16-162 folds into the PPIase cyclophilin-type domain; that stretch reads KTAYATIKTN…IESVVFSPSL (147 aa).

This sequence belongs to the cyclophilin-type PPIase family.

It catalyses the reaction [protein]-peptidylproline (omega=180) = [protein]-peptidylproline (omega=0). Functionally, PPIases accelerate the folding of proteins. It catalyzes the cis-trans isomerization of proline imidic peptide bonds in oligopeptides. In Helicobacter pylori (strain J99 / ATCC 700824) (Campylobacter pylori J99), this protein is Peptidyl-prolyl cis-trans isomerase (ppiA).